The sequence spans 250 residues: Probable transcriptional regulatory protein DP2908 (250 aa).

It belongs to the TACO1 family.

It localises to the cytoplasm. The chain is Probable transcriptional regulatory protein DP2908 from Desulfotalea psychrophila (strain LSv54 / DSM 12343).